A 301-amino-acid chain; its full sequence is MAPSEAPQPLPLCALEHQSLAIDLLLSMFPDEIEQTSSTATSIEHLRQYLDDPSQASPRLPHSVEFTLNLSIDPEHELQLHIRILLEQVNVDIGKDADADEPPLPVITFRCPTWMNRKTHTDLVQRMPLDSPDSILMTVEYLKEESTEYLATCAASSATNEPEAQATSGKLVRVWFYLQSLSTRSKRNDIVNWAPNYDLTGFVLAGKPGILCLEGTSDNISAYMSDIKTRSWSDIPSHQKKISERYREEGQHIERVFQNMREVTGEISKGGHRGNRGEMGEVRRMFEGVGLGEVFAEVLGL.

Its function is as follows. Part of the gene cluster that mediates the biosynthesis of the antihypercholesterolemic agents phomoidrides which are dimeric anhydrides. The function of phiF within the pathway has still to be determined. The pathway begins with the highly reducing polyketide synthase phiA that catalyzes the formation of a C12-fatty acyl-ACP, starting from one acetate and 5 malonate units. The hydrolase phiM is involved in the release of the C12-fatty acyl chain from phiA. The alkylcitrate synthase (ACS) phiJ and the alkylcitrate dehydratase (ACDH) phiI then give rise to decarboxylated monomeric anhydrides by coupling the C12-fatty acyl chain with oxalacetic acid. The cyclase phiC is responsible for the dimerization of the monomeric anhydrides which leads to the production of prephomoidride that contains the characteristic bicyclo[4.3.1]deca-1,6-diene system of phomoidrides. Iterative oxidation catalyzed by the alpha-ketoglutarate-dependent dioxygenase phiK produced then phomoidride A. Finally, the methyltransferase phiE converts phomoidride A to phomoidride B via an acetalization reaction. The phosphatidylethanolamine-binding protein phiB and phiN are not essential for dimerization and their functions have still to be determined. The chain is Phomoidride biosynthesis cluster protein F from Fungal sp. (strain ATCC 74256).